Consider the following 662-residue polypeptide: Glycogen debranching enzyme (662 aa).

Catalysis depends on aspartate 338, which acts as the Nucleophile. Glutamate 373 acts as the Proton donor in catalysis.

It belongs to the glycosyl hydrolase 13 family.

The catalysed reaction is Hydrolysis of (1-&gt;6)-alpha-D-glucosidic linkages to branches with degrees of polymerization of three or four glucose residues in limit dextrin.. It participates in glycan degradation; glycogen degradation. In terms of biological role, removes maltotriose and maltotetraose chains that are attached by 1,6-alpha-linkage to the limit dextrin main chain, generating a debranched limit dextrin. This Yersinia pestis bv. Antiqua (strain Angola) protein is Glycogen debranching enzyme.